The chain runs to 495 residues: tRNA modification GTPase MnmE (495 aa).

3 residues coordinate (6S)-5-formyl-5,6,7,8-tetrahydrofolate: Arg28, Glu89, and Lys128. In terms of domain architecture, TrmE-type G spans 223–417 (GVRIVLGGCP…LRAQTLHLLH (195 aa)). Residue Asn233 coordinates K(+). GTP-binding positions include 233 to 238 (NAGKSS), 252 to 258 (SSVPGTT), and 277 to 280 (DTAG). Ser237 serves as a coordination point for Mg(2+). Residues Ser252, Val254, and Thr257 each contribute to the K(+) site. Residue Thr258 participates in Mg(2+) binding. (6S)-5-formyl-5,6,7,8-tetrahydrofolate is bound at residue Lys495.

The protein belongs to the TRAFAC class TrmE-Era-EngA-EngB-Septin-like GTPase superfamily. TrmE GTPase family. Homodimer. Heterotetramer of two MnmE and two MnmG subunits. Requires K(+) as cofactor.

It is found in the cytoplasm. Exhibits a very high intrinsic GTPase hydrolysis rate. Involved in the addition of a carboxymethylaminomethyl (cmnm) group at the wobble position (U34) of certain tRNAs, forming tRNA-cmnm(5)s(2)U34. The polypeptide is tRNA modification GTPase MnmE (Treponema pallidum (strain Nichols)).